The primary structure comprises 327 residues: Flotillin-like protein FloA (327 aa).

The helical transmembrane segment at 2 to 22 (IGLIIIVVIVLVALLLLFSFV) threads the bilayer. The interval 305–327 (ADTGMRNSINQRTNQKDDESPDK) is disordered. Over residues 318–327 (NQKDDESPDK) the composition is skewed to basic and acidic residues.

The protein belongs to the flotillin-like FloA family. As to quaternary structure, homooligomerizes.

It is found in the cell membrane. Its subcellular location is the membrane raft. Its function is as follows. Found in functional membrane microdomains (FMM) that may be equivalent to eukaryotic membrane rafts. FMMs are highly dynamic and increase in number as cells age. Flotillins are thought to be important factors in membrane fluidity. This is Flotillin-like protein FloA from Staphylococcus saprophyticus subsp. saprophyticus (strain ATCC 15305 / DSM 20229 / NCIMB 8711 / NCTC 7292 / S-41).